Consider the following 675-residue polypeptide: Probable potassium transport system protein Kup (675 aa).

12 helical membrane-spanning segments follow: residues L12–V32, V55–L75, W98–P118, W143–G163, S170–I190, M216–S236, T249–L269, I296–G316, I345–F365, A374–V394, F401–S421, and G428–F448.

Belongs to the HAK/KUP transporter (TC 2.A.72) family.

It is found in the cell membrane. It carries out the reaction K(+)(in) + H(+)(in) = K(+)(out) + H(+)(out). Transport of potassium into the cell. Likely operates as a K(+):H(+) symporter. The polypeptide is Probable potassium transport system protein Kup (Levilactobacillus brevis (strain ATCC 367 / BCRC 12310 / CIP 105137 / JCM 1170 / LMG 11437 / NCIMB 947 / NCTC 947) (Lactobacillus brevis)).